The chain runs to 244 residues: Dihydropteridine reductase (244 aa).

Residue Ala2 is modified to N-acetylalanine. Residue 14–38 participates in NADP(+) binding; that stretch reads LVYGGRGALGSRCVQAFRARNWWVA. N6-succinyllysine occurs at positions 73, 79, 96, and 102. Tyr150 (proton acceptor) is an active-site residue.

Belongs to the short-chain dehydrogenases/reductases (SDR) family. As to quaternary structure, homodimer.

The enzyme catalyses 5,6,7,8-tetrahydropteridine + NAD(+) = 6,7-dihydropteridine + NADH + H(+). The catalysed reaction is 5,6,7,8-tetrahydropteridine + NADP(+) = 6,7-dihydropteridine + NADPH + H(+). Its function is as follows. Catalyzes the conversion of quinonoid dihydrobiopterin into tetrahydrobiopterin. The protein is Dihydropteridine reductase (QDPR) of Homo sapiens (Human).